The sequence spans 356 residues: Probable scoulerine-9-O-methyltransferase OMT2B (356 aa).

Met-173 provides a ligand contact to S-adenosyl-L-methionine. Residue Asp-176 participates in substrate binding. Residues Thr-177, Gly-202, Asp-225, 245–246, and Lys-259 contribute to the S-adenosyl-L-methionine site; that span reads DI. 260–264 contributes to the substrate binding site; sequence YVLHN. The active-site Proton acceptor is the His-263.

It belongs to the class I-like SAM-binding methyltransferase superfamily. Cation-independent O-methyltransferase family. COMT subfamily.

The catalysed reaction is (S)-scoulerine + S-adenosyl-L-methionine = (S)-tetrahydrocolumbamine + S-adenosyl-L-homocysteine + H(+). The protein operates within alkaloid biosynthesis. Its function is as follows. Methyltransferase involved in the biosynthesis of the benzylisoquinoline alkaloid noscapine. Catalyzes the conversion of (S)-scoulerine to (S)-tetrahydrocolumbamine. The heterodimers OMT2B-SOMT3 and OMT2B-6OMT do not possess 3-O-acetyl-4'-O-demethylpapaveroxine 4'-O-methyltransferase activity. In Papaver somniferum (Opium poppy), this protein is Probable scoulerine-9-O-methyltransferase OMT2B.